The sequence spans 211 residues: DELTA-stichotoxin-Hmg2a (211 aa).

The signal sequence occupies residues 1 to 19; sequence MNRLIVLFLIVTMICATIA. Positions 20 to 34 are excised as a propeptide; it reads VPSREELEDQKEYKR. Residues 37-46 are plays an important role in the hemolytic activity; that stretch reads ALAGTIIEGA. The segment at 45 to 64 is N-terminal region; that stretch reads GASLGFQILDKVLGELGKVS. Residues serine 88, valine 121, serine 139, proline 141, tyrosine 167, tyrosine 171, and tyrosine 172 each coordinate phosphocholine. Positions 139–154 are trp-rich region, which is important for the binding to lipid membrane; the sequence is SVPFDYNFYSNWWDVK. The Cell attachment site, crucial for protein stability signature appears at 177–179; sequence RGD.

This sequence belongs to the actinoporin family. Sea anemone subfamily. In terms of assembly, octamer or nonamer in membranes. Monomer in the soluble state.

Its subcellular location is the secreted. It localises to the nematocyst. It is found in the target cell membrane. Pore-forming protein that forms cations-selective hydrophilic pores of around 1 nm and causes cardiac stimulation and cytolysis. Pore formation is a multi-step process that involves specific recognition of membrane sphingomyelin (but neither cholesterol nor phosphatidylcholine) using aromatic rich region and adjacent phosphocholine (POC) binding site, firm binding to the membrane (mainly driven by hydrophobic interactions) accompanied by the transfer of the N-terminal region to the lipid-water interface and finally pore formation after oligomerization of monomers. The sequence is that of DELTA-stichotoxin-Hmg2a from Heteractis magnifica (Magnificent sea anemone).